The following is a 138-amino-acid chain: Protein E6 (138 aa).

Zinc fingers lie at residues 25 to 61 (CNFC…CAAC) and 98 to 134 (CLIC…CRHC).

This sequence belongs to the papillomaviridae E6 protein family. Forms homodimers. Interacts with ubiquitin-protein ligase UBE3A/E6-AP; this interaction stimulates UBE3A ubiquitin activity. Interacts with host BAK1.

The protein resides in the host cytoplasm. It is found in the host nucleus. Its function is as follows. Plays a major role in the induction and maintenance of cellular transformation. E6 associates with host UBE3A/E6-AP ubiquitin-protein ligase and modulates its activity. Protects host keratinocytes from apoptosis by mediating the degradation of host BAK1. May also inhibit host immune response. In Homo sapiens (Human), this protein is Protein E6.